The chain runs to 72 residues: Translation initiation factor IF-1 (72 aa).

The 72-residue stretch at methionine 1–arginine 72 folds into the S1-like domain.

This sequence belongs to the IF-1 family. As to quaternary structure, component of the 30S ribosomal translation pre-initiation complex which assembles on the 30S ribosome in the order IF-2 and IF-3, IF-1 and N-formylmethionyl-tRNA(fMet); mRNA recruitment can occur at any time during PIC assembly.

The protein localises to the cytoplasm. Functionally, one of the essential components for the initiation of protein synthesis. Stabilizes the binding of IF-2 and IF-3 on the 30S subunit to which N-formylmethionyl-tRNA(fMet) subsequently binds. Helps modulate mRNA selection, yielding the 30S pre-initiation complex (PIC). Upon addition of the 50S ribosomal subunit IF-1, IF-2 and IF-3 are released leaving the mature 70S translation initiation complex. This Wigglesworthia glossinidia brevipalpis protein is Translation initiation factor IF-1.